Reading from the N-terminus, the 420-residue chain is ATP phosphoribosyltransferase regulatory subunit (420 aa).

This sequence belongs to the class-II aminoacyl-tRNA synthetase family. HisZ subfamily. As to quaternary structure, heteromultimer composed of HisG and HisZ subunits.

It localises to the cytoplasm. The protein operates within amino-acid biosynthesis; L-histidine biosynthesis; L-histidine from 5-phospho-alpha-D-ribose 1-diphosphate: step 1/9. Its function is as follows. Required for the first step of histidine biosynthesis. May allow the feedback regulation of ATP phosphoribosyltransferase activity by histidine. The sequence is that of ATP phosphoribosyltransferase regulatory subunit from Bacillus mycoides (strain KBAB4) (Bacillus weihenstephanensis).